We begin with the raw amino-acid sequence, 873 residues long: Leucine--tRNA ligase (873 aa).

The 'HIGH' region motif lies at 47 to 57; sequence PYPSGKLHMGH. The 'KMSKS' region signature appears at 636 to 640; the sequence is KMSKS. Lys639 contacts ATP.

This sequence belongs to the class-I aminoacyl-tRNA synthetase family.

It localises to the cytoplasm. It carries out the reaction tRNA(Leu) + L-leucine + ATP = L-leucyl-tRNA(Leu) + AMP + diphosphate. In Acinetobacter baylyi (strain ATCC 33305 / BD413 / ADP1), this protein is Leucine--tRNA ligase.